The following is a 176-amino-acid chain: Zinc finger A20 and AN1 domain-containing stress-associated protein 9 (176 aa).

The A20-type zinc finger occupies 16–50 (ASEPKLCVKGCGFFGSPSNMDLCSKCYRGICAEEA). Positions 22, 26, 38, 41, 117, 120, 131, 133, 138, 141, 147, and 149 each coordinate Zn(2+). Residues 111 to 157 (PARTNRCLCCNKKVGIMGFKCKCGSTFCGEHRYPETHDCSFDFKEVG) form an AN1-type zinc finger.

May be involved in environmental stress response. The sequence is that of Zinc finger A20 and AN1 domain-containing stress-associated protein 9 (SAP9) from Arabidopsis thaliana (Mouse-ear cress).